The primary structure comprises 159 residues: Lipoprotein signal peptidase (159 aa).

The next 2 helical transmembrane spans lie at 59-79 (PMIL…YVVF) and 87-107 (FLIT…DRIL). Active-site residues include aspartate 113 and aspartate 139. Residues 131 to 151 (LWPVFNIADSAITIGACVLVI) form a helical membrane-spanning segment.

This sequence belongs to the peptidase A8 family.

The protein localises to the cell inner membrane. The catalysed reaction is Release of signal peptides from bacterial membrane prolipoproteins. Hydrolyzes -Xaa-Yaa-Zaa-|-(S,diacylglyceryl)Cys-, in which Xaa is hydrophobic (preferably Leu), and Yaa (Ala or Ser) and Zaa (Gly or Ala) have small, neutral side chains.. Its pathway is protein modification; lipoprotein biosynthesis (signal peptide cleavage). This protein specifically catalyzes the removal of signal peptides from prolipoproteins. This Chlorobium phaeobacteroides (strain BS1) protein is Lipoprotein signal peptidase.